We begin with the raw amino-acid sequence, 513 residues long: Glutamyl-tRNA(Gln) amidotransferase subunit A (513 aa).

Active-site charge relay system residues include lysine 85 and serine 160. The active-site Acyl-ester intermediate is the serine 184.

The protein belongs to the amidase family. GatA subfamily. As to quaternary structure, heterotrimer of A, B and C subunits.

The catalysed reaction is L-glutamyl-tRNA(Gln) + L-glutamine + ATP + H2O = L-glutaminyl-tRNA(Gln) + L-glutamate + ADP + phosphate + H(+). In terms of biological role, allows the formation of correctly charged Gln-tRNA(Gln) through the transamidation of misacylated Glu-tRNA(Gln) in organisms which lack glutaminyl-tRNA synthetase. The reaction takes place in the presence of glutamine and ATP through an activated gamma-phospho-Glu-tRNA(Gln). This is Glutamyl-tRNA(Gln) amidotransferase subunit A from Bifidobacterium longum subsp. infantis (strain ATCC 15697 / DSM 20088 / JCM 1222 / NCTC 11817 / S12).